Here is a 351-residue protein sequence, read N- to C-terminus: Increased glyphosate resistance protein (351 aa).

Residues 1–18 (MHREDDSTSTGRREERLS) show a composition bias toward basic and acidic residues. The disordered stretch occupies residues 1–29 (MHREDDSTSTGRREERLSTGKGDSLQPGP).

Its function is as follows. Confers an increase in glyphosate resistance when expressed in E.coli. The protein is Increased glyphosate resistance protein of Pseudomonas sp. (strain PG2982).